The chain runs to 1014 residues: Regulator of telomere elongation helicase 1 homolog (1014 aa).

One can recognise a Helicase ATP-binding domain in the interval 7–324 (AGIPVHFPFE…KEMLLELEKA (318 aa)). 42–49 (SPTGTGKT) lines the ATP pocket. [4Fe-4S] cluster contacts are provided by Cys-147, Cys-165, Cys-174, and Cys-210. Residues 253-256 (DEAH) carry the DEAH box motif. Thr-873 is modified (phosphothreonine). The tract at residues 891–917 (TDMVKTEPGTSNSCSYGNTSSSGSDSR) is disordered. Residues 899-917 (GTSNSCSYGNTSSSGSDSR) are compositionally biased toward low complexity.

The protein belongs to the helicase family. RAD3/XPD subfamily.

The protein localises to the nucleus. The catalysed reaction is ATP + H2O = ADP + phosphate + H(+). A probable ATP-dependent DNA helicase implicated in DNA repair and the maintenance of genomic stability. Acts as an anti-recombinase to counteract toxic recombination and limit crossover during meiosis. Regulates meiotic recombination and crossover homeostasis by physically dissociating strand invasion events and thereby promotes noncrossover repair by meiotic synthesis dependent strand annealing (SDSA) as well as disassembly of D loop recombination intermediates. This is Regulator of telomere elongation helicase 1 homolog from Drosophila mojavensis (Fruit fly).